Here is a 229-residue protein sequence, read N- to C-terminus: uncharacterized protein (229 aa).

The next 7 helical transmembrane spans lie at 21 to 41 (IYSL…LMLY), 56 to 76 (MIYY…SSAA), 83 to 103 (ALPI…FIIV), 109 to 129 (TVFQ…IIGV), 141 to 161 (AMFA…FIGS), 162 to 182 (GMMS…LIAS), and 202 to 222 (WAVA…ISLL).

The protein belongs to the BI1 family.

Its subcellular location is the cell membrane. This is an uncharacterized protein from Streptococcus pyogenes serotype M1.